Reading from the N-terminus, the 1528-residue chain is Cell surface antigen I/II (1528 aa).

Residues 1–50 form the signal peptide; it reads MLQKCKLEGIIICNEKRLLGAAKVKSGRTLSGALLGTAILASGAGQKALA. The segment at 50 to 156 is disordered; it reads AEETSTTSTS…PEIKDDYSKQ (107 aa). Positions 51 to 68 are enriched in low complexity; the sequence is EETSTTSTSGGDTAVVGT. Composition is skewed to polar residues over residues 83–97 and 124–133; these read NPSSQAETSQAQARQ and TVSQDATVNK. Residues 142–154 show a composition bias toward basic and acidic residues; that stretch reads ANQKEPEIKDDYS. Ag I/II A repeat units follow at residues 161–235, 236–315, 316–396, and 397–478; these read QKAT…QQAN, SDSQ…QAGN, AANE…QSGN, and AANE…KKDL. 2 disordered regions span residues 840 to 951 and 1459 to 1480; these read VPKV…VEPV and SNTVRTSTPEPKQPSPVDPKTT. Residues 855-879 are compositionally biased toward basic and acidic residues; it reads TKPDEPTYEVEKELVDLPVEPKYEP. Polar residues predominate over residues 1459–1468; sequence SNTVRTSTPE. The LPXTG sorting signal motif lies at 1503–1507; the sequence is LPATG. A Pentaglycyl murein peptidoglycan amidated threonine modification is found at threonine 1506. Positions 1507-1528 are cleaved as a propeptide — removed by sortase; the sequence is GDSSNAYLPLLGLVSLTAGFSC.

It belongs to the antigen I/II family.

It localises to the secreted. Its subcellular location is the cell wall. This chain is Cell surface antigen I/II, found in Streptococcus downei (Streptococcus sobrinus).